Consider the following 204-residue polypeptide: B9 domain-containing protein 1 (204 aa).

The C2 B9-type domain maps to 9–127 (FLLMVNGQVE…TIPMFVPEST (119 aa)). Positions 182-204 (GYDTGPSDTQGVLGPSPPQSFPQ) are disordered.

The protein belongs to the B9D family. Part of the tectonic-like complex (also named B9 complex).

The protein localises to the cytoplasm. The protein resides in the cytoskeleton. It is found in the cilium basal body. Its subcellular location is the cilium axoneme. In terms of biological role, component of the tectonic-like complex, a complex localized at the transition zone of primary cilia and acting as a barrier that prevents diffusion of transmembrane proteins between the cilia and plasma membranes. Required for ciliogenesis and sonic hedgehog/SHH signaling. This Homo sapiens (Human) protein is B9 domain-containing protein 1 (B9D1).